The chain runs to 254 residues: Putative ankyrin-containing lipoprotein Lxx09580 (254 aa).

Positions 1 to 22 are cleaved as a signal peptide; the sequence is MTEIRYVRLLTLVLASSVLLAG. Cysteine 23 carries N-palmitoyl cysteine lipidation. The S-diacylglycerol cysteine moiety is linked to residue cysteine 23. 5 ANK repeats span residues 56–85, 89–118, 122–151, 155–184, and 188–222; these read AATA…AIED, GGRT…DVNA, IQDS…DVNA, FNGT…DLDH, and PGWT…NPDI.

Its subcellular location is the cell membrane. The polypeptide is Putative ankyrin-containing lipoprotein Lxx09580 (Leifsonia xyli subsp. xyli (strain CTCB07)).